Reading from the N-terminus, the 344-residue chain is Glyceraldehyde-3-phosphate dehydrogenase (344 aa).

Residues T11–I12 and G110 each bind NAD(+). Residue S139 to N141 participates in D-glyceraldehyde 3-phosphate binding. C140 acts as the Nucleophile in catalysis. Residue R169 participates in NAD(+) binding. D-glyceraldehyde 3-phosphate is bound at residue H195–G196. Residue Q302 coordinates NAD(+).

Belongs to the glyceraldehyde-3-phosphate dehydrogenase family. Homotetramer.

The protein localises to the cytoplasm. The catalysed reaction is D-glyceraldehyde 3-phosphate + phosphate + NADP(+) = (2R)-3-phospho-glyceroyl phosphate + NADPH + H(+). It carries out the reaction D-glyceraldehyde 3-phosphate + phosphate + NAD(+) = (2R)-3-phospho-glyceroyl phosphate + NADH + H(+). It functions in the pathway carbohydrate degradation; glycolysis; pyruvate from D-glyceraldehyde 3-phosphate: step 1/5. The polypeptide is Glyceraldehyde-3-phosphate dehydrogenase (Pyrobaculum calidifontis (strain DSM 21063 / JCM 11548 / VA1)).